Reading from the N-terminus, the 225-residue chain is MTAIVPVITVDGPSGAGKGTLCKALAQALGWHLLDSGAIYRVLALAALHHQVNIDSEEALVPLAAHLDVRFDAAEGDLRVILEGEDVSTAIRTETVGNTASRAAAFPRVREALLRRQRAFREAPGLIADGRDMGTVVFPDAPVKIFLDASAEERAHRRMLQLQGKGFDVNFESLLAEIKERDFRDRNRAVAPLVPAVGALQLDSTSLSIEQVIAQALAHARQTLV.

An ATP-binding site is contributed by 12-20 (GPSGAGKGT).

Belongs to the cytidylate kinase family. Type 1 subfamily.

It localises to the cytoplasm. The catalysed reaction is CMP + ATP = CDP + ADP. The enzyme catalyses dCMP + ATP = dCDP + ADP. This chain is Cytidylate kinase, found in Edwardsiella ictaluri (strain 93-146).